We begin with the raw amino-acid sequence, 525 residues long: uncharacterized protein (525 aa).

Positions 21–48 (CLICRSMRKKCDEVHPQCGRCLKAGKQC) form a DNA-binding region, zn(2)-C6 fungal-type.

It localises to the cytoplasm. Its subcellular location is the nucleus. This is an uncharacterized protein from Schizosaccharomyces pombe (strain 972 / ATCC 24843) (Fission yeast).